The chain runs to 68 residues: Large ribosomal subunit protein uL29 (68 aa).

Belongs to the universal ribosomal protein uL29 family.

The chain is Large ribosomal subunit protein uL29 (rpl29) from Thermoplasma acidophilum (strain ATCC 25905 / DSM 1728 / JCM 9062 / NBRC 15155 / AMRC-C165).